Here is a 308-residue protein sequence, read N- to C-terminus: Protoheme IX farnesyltransferase (308 aa).

The next 8 helical transmembrane spans lie at 31-51 (VIELLLVTAIPAMLLAQRGTV), 53-73 (PLLIVNTLIGGMLAAGGANAL), 102-122 (NALVFGLVLTAGSFLWLWWTT), 124-144 (LLSGLLALATIAFYVFIYTLL), 149-169 (TSQNVVWGGAAGCMPVMIGWS), 170-190 (AVTGTIQWPALVMFAIIFFWT), 240-260 (LALATGWLYAAVAVVAGVWFL), and 288-308 (YLAVVFCALAIDSAIGLPHLF).

Belongs to the UbiA prenyltransferase family. Protoheme IX farnesyltransferase subfamily.

Its subcellular location is the cell membrane. It catalyses the reaction heme b + (2E,6E)-farnesyl diphosphate + H2O = Fe(II)-heme o + diphosphate. Its pathway is porphyrin-containing compound metabolism; heme O biosynthesis; heme O from protoheme: step 1/1. Converts heme B (protoheme IX) to heme O by substitution of the vinyl group on carbon 2 of heme B porphyrin ring with a hydroxyethyl farnesyl side group. This Mycobacterium avium (strain 104) protein is Protoheme IX farnesyltransferase.